The sequence spans 84 residues: Toxin Cex12 (84 aa).

Residues Met-1 to Ala-19 form the signal peptide. Residues Asn-20–Arg-83 enclose the LCN-type CS-alpha/beta domain. Cystine bridges form between Cys-31-Cys-82, Cys-35-Cys-58, Cys-44-Cys-63, and Cys-48-Cys-65.

This sequence belongs to the long (4 C-C) scorpion toxin superfamily. Sodium channel inhibitor family. Beta subfamily. In terms of tissue distribution, expressed by the venom gland.

It is found in the secreted. Beta toxins bind voltage-independently at site-4 of sodium channels (Nav) and shift the voltage of activation toward more negative potentials thereby affecting sodium channel activation and promoting spontaneous and repetitive firing. The polypeptide is Toxin Cex12 (Centruroides exilicauda (Bark scorpion)).